The sequence spans 102 residues: NADH-quinone oxidoreductase subunit K 1 (102 aa).

Transmembrane regions (helical) follow at residues 6 to 26 (LNAY…GVLV), 31 to 51 (LAIL…FVAF), and 65 to 85 (FLVI…TVLL).

It belongs to the complex I subunit 4L family. As to quaternary structure, NDH-1 is composed of 14 different subunits. Subunits NuoA, H, J, K, L, M, N constitute the membrane sector of the complex.

Its subcellular location is the cell membrane. It carries out the reaction a quinone + NADH + 5 H(+)(in) = a quinol + NAD(+) + 4 H(+)(out). NDH-1 shuttles electrons from NADH, via FMN and iron-sulfur (Fe-S) centers, to quinones in the respiratory chain. The immediate electron acceptor for the enzyme in this species is believed to be a menaquinone. Couples the redox reaction to proton translocation (for every two electrons transferred, four hydrogen ions are translocated across the cytoplasmic membrane), and thus conserves the redox energy in a proton gradient. In Symbiobacterium thermophilum (strain DSM 24528 / JCM 14929 / IAM 14863 / T), this protein is NADH-quinone oxidoreductase subunit K 1.